The primary structure comprises 733 residues: Catalase-peroxidase (733 aa).

Positions 1–23 are cleaved as a signal peptide; the sequence is MNNESKCPFAAAHGVRSPATARA. The tryptophyl-tyrosyl-methioninium (Trp-Tyr) (with M-250) cross-link spans 96–224; the sequence is WHSAGTYRTA…LAAVQMGLIY (129 aa). His-97 serves as the catalytic Proton acceptor. The tryptophyl-tyrosyl-methioninium (Tyr-Met) (with W-96) cross-link spans 224 to 250; it reads YVNPEGPDGNPDPVASGRDVRETFARM. His-265 provides a ligand contact to heme b.

Belongs to the peroxidase family. Peroxidase/catalase subfamily. As to quaternary structure, homodimer or homotetramer. Heme b serves as cofactor. Formation of the three residue Trp-Tyr-Met cross-link is important for the catalase, but not the peroxidase activity of the enzyme.

The enzyme catalyses H2O2 + AH2 = A + 2 H2O. It catalyses the reaction 2 H2O2 = O2 + 2 H2O. Functionally, bifunctional enzyme with both catalase and broad-spectrum peroxidase activity. The protein is Catalase-peroxidase of Azoarcus sp. (strain BH72).